Reading from the N-terminus, the 331-residue chain is 3-dehydroquinate synthase homolog (331 aa).

Belongs to the archaeal-type DHQ synthase family.

In Persephonella marina (strain DSM 14350 / EX-H1), this protein is 3-dehydroquinate synthase homolog.